We begin with the raw amino-acid sequence, 597 residues long: MKNIRNFSIIAHIDHGKSTLADRFIQYCGGLDLREMSTQVLDSMDIEKERGITIKAQTAALNYKARDGQVYQLNLIDTPGHVDFSYEVSRSLSACEGALLVVDASQGVEAQTVANCYTAIDLGVEVVPVLNKIDLPAADPERVEQEIEDIIGIDAVGAVQCSAKSGIGVEDVLEEIVAKIPAPTGDENAPLQAVIVDSWFDNYVGVVMLIRVKNGTIKLKDKVRFMSTKAETQVEQLGVFTPKSVQKQELKAGEVGFLITGVKELGQAKVGDTVTLVANPATEPLPGFQEVQSQVFAGLYPVESHDYEALRDALEKLQLNDASLKFEPEVSQALGFGFRCGFLGLLHLEIVQERLEREFDMDLITTAPTVIYEVVLKSGEKIEVENPSKLPDIGSIETILEPIITATILVPQEYVGNVMTLCNQKRGVQVNMQYMGRQVMLTYDLPMNEVVMDFFDKLKSTSRGYASLDYHFKEFQPSDLIKLDIMVNGEKVDALSLIVHRQSAVHRGRELASKMRELIPRQMFDIAVQAAIGSQIIARENVKALRKNVLAKCYGGDITRKKKLLEKQKAGKRRMKQVGNVEIPQSAFLAILQVSDK.

The 183-residue stretch at 2-184 (KNIRNFSIIA…EIVAKIPAPT (183 aa)) folds into the tr-type G domain. GTP contacts are provided by residues 14–19 (DHGKST) and 131–134 (NKID).

The protein belongs to the TRAFAC class translation factor GTPase superfamily. Classic translation factor GTPase family. LepA subfamily.

Its subcellular location is the cell inner membrane. The catalysed reaction is GTP + H2O = GDP + phosphate + H(+). Required for accurate and efficient protein synthesis under certain stress conditions. May act as a fidelity factor of the translation reaction, by catalyzing a one-codon backward translocation of tRNAs on improperly translocated ribosomes. Back-translocation proceeds from a post-translocation (POST) complex to a pre-translocation (PRE) complex, thus giving elongation factor G a second chance to translocate the tRNAs correctly. Binds to ribosomes in a GTP-dependent manner. In Neisseria meningitidis serogroup B (strain ATCC BAA-335 / MC58), this protein is Elongation factor 4.